The primary structure comprises 254 residues: uncharacterized protein (254 aa).

Residues isoleucine 18, serine 37, aspartate 63, asparagine 90, tyrosine 159, lysine 163, valine 192, and threonine 194 each coordinate NADP(+). Catalysis depends on tyrosine 159, which acts as the Proton donor. Lysine 163 acts as the Lowers pKa of active site Tyr in catalysis.

This sequence belongs to the short-chain dehydrogenases/reductases (SDR) family.

The protein resides in the cytoplasm. The protein localises to the nucleus. This is an uncharacterized protein from Schizosaccharomyces pombe (strain 972 / ATCC 24843) (Fission yeast).